The primary structure comprises 510 residues: 2,3-bisphosphoglycerate-independent phosphoglycerate mutase (510 aa).

Mn(2+) is bound by residues Asp-12 and Ser-62. The active-site Phosphoserine intermediate is Ser-62. Substrate is bound by residues His-121, 151 to 152, Arg-183, Arg-189, 258 to 261, and Lys-331; these read RD and RPDR. Mn(2+) contacts are provided by Asp-398, His-402, Asp-439, His-440, and His-458.

Belongs to the BPG-independent phosphoglycerate mutase family. In terms of assembly, monomer. It depends on Mn(2+) as a cofactor.

It carries out the reaction (2R)-2-phosphoglycerate = (2R)-3-phosphoglycerate. It participates in carbohydrate degradation; glycolysis; pyruvate from D-glyceraldehyde 3-phosphate: step 3/5. Catalyzes the interconversion of 2-phosphoglycerate and 3-phosphoglycerate. The protein is 2,3-bisphosphoglycerate-independent phosphoglycerate mutase of Clostridioides difficile (strain 630) (Peptoclostridium difficile).